The sequence spans 348 residues: D-alanine--D-alanine ligase (348 aa).

An ATP-grasp domain is found at 136-344 (KSVFKSYNLP…LEKLVASLIE (209 aa)). Residue 171 to 226 (NKIINYPCFIKPANLGSSVGITKAYSKEEFITGIEFAAKYDERIIVEKSIEGRELE) coordinates ATP. Mg(2+) contacts are provided by D297, E311, and N313.

It belongs to the D-alanine--D-alanine ligase family. The cofactor is Mg(2+). It depends on Mn(2+) as a cofactor.

It is found in the cytoplasm. The catalysed reaction is 2 D-alanine + ATP = D-alanyl-D-alanine + ADP + phosphate + H(+). It functions in the pathway cell wall biogenesis; peptidoglycan biosynthesis. In terms of biological role, cell wall formation. The sequence is that of D-alanine--D-alanine ligase from Prochlorococcus marinus (strain NATL1A).